The primary structure comprises 198 residues: Recombination protein RecR (198 aa).

A C4-type zinc finger spans residues 57–72 (CSVCGRLTDDDPCIIC). Residues 80–175 (TKILVVEDSK…KVTRLARGLA (96 aa)) enclose the Toprim domain.

This sequence belongs to the RecR family.

May play a role in DNA repair. It seems to be involved in an RecBC-independent recombinational process of DNA repair. It may act with RecF and RecO. The chain is Recombination protein RecR from Streptococcus thermophilus (strain CNRZ 1066).